The sequence spans 743 residues: Pentatricopeptide repeat-containing protein At2g16880 (743 aa).

PPR repeat units lie at residues 130–164 (SKAL…KLKP), 165–202 (NLLT…GVSL), 203–233 (NVQT…MVSE), 239–273 (DNVT…GLVP), 274–308 (NRVT…NVLP), 309–343 (DLCT…KLQP), 344–378 (DVVT…GVKA), 379–414 (NQVT…GFSP), 415–449 (DIVT…GIKM), 450–484 (NTIT…GFIV), 485–519 (DEVT…KITP), 520–554 (TVST…GLLP), 555–589 (DDST…SFKP), 590–620 (DNYT…LIEE), 624–658 (DTVT…GLEP), and 659–689 (DRFT…FSGK).

Belongs to the PPR family. P subfamily.

This Arabidopsis thaliana (Mouse-ear cress) protein is Pentatricopeptide repeat-containing protein At2g16880.